The primary structure comprises 170 residues: Small ribosomal subunit protein uS4 (170 aa).

The S4 RNA-binding domain occupies 100–164; that stretch reads RRLQTVVYRE…SDLTDELHPA (65 aa).

The protein belongs to the universal ribosomal protein uS4 family. Part of the 30S ribosomal subunit. Contacts protein S5. The interaction surface between S4 and S5 is involved in control of translational fidelity.

Functionally, one of the primary rRNA binding proteins, it binds directly to 16S rRNA where it nucleates assembly of the body of the 30S subunit. With S5 and S12 plays an important role in translational accuracy. The chain is Small ribosomal subunit protein uS4 from Halobacterium salinarum (strain ATCC 29341 / DSM 671 / R1).